The primary structure comprises 171 residues: tRNA-splicing endonuclease subunit Sen15 (171 aa).

The interval 1-35 (MEERGDSEPTPGCSGLGPGGVRGFGDGGGAPSWAP) is disordered. Phosphoserine is present on S7. A compositionally biased stretch (gly residues) spans 14–30 (SGLGPGGVRGFGDGGGA). S168 carries the phosphoserine modification.

This sequence belongs to the SEN15 family. In terms of assembly, homodimer. tRNA splicing endonuclease is a heterotetramer composed of TSEN2, TSEN15, TSEN34/LENG5 and TSEN54. tRNA splicing endonuclease complex also contains proteins of the Pre-mRNA 3' end processing machinery, such as CLP1, CPSF1, CPSF4 and CSTF2. In terms of tissue distribution, widely expressed. Highly expressed in testis and uterus.

It is found in the nucleus. It localises to the nucleolus. In terms of biological role, non-catalytic subunit of the tRNA-splicing endonuclease complex, a complex responsible for identification and cleavage of the splice sites in pre-tRNA. It cleaves pre-tRNA at the 5' and 3' splice sites to release the intron. The products are an intron and two tRNA half-molecules bearing 2',3' cyclic phosphate and 5'-OH termini. There are no conserved sequences at the splice sites, but the intron is invariably located at the same site in the gene, placing the splice sites an invariant distance from the constant structural features of the tRNA body. The tRNA splicing endonuclease is also involved in mRNA processing via its association with pre-mRNA 3'-end processing factors, establishing a link between pre-tRNA splicing and pre-mRNA 3'-end formation, suggesting that the endonuclease subunits function in multiple RNA-processing events. This Homo sapiens (Human) protein is tRNA-splicing endonuclease subunit Sen15 (TSEN15).